Here is a 420-residue protein sequence, read N- to C-terminus: MTLLALGINHKTAPVSLRERVTFSPESIEQALTSLLQQPLVQGGVVLSTCNRTELYLSVEQQEHIHEQLVSWLCEYHHLRPEEVSKSLYWHHGNEAVSHLMRVASGLDSLVLGEPQILGQVKKAFAESQRGQSLSGELERLFQKSFSVAKRVRTETEIGASAVSVAFAACTLARQIFESLAELNVLLVGAGETIELVARHLREHKVRHMIIANRTRERAQLLADEVGAEVITLPEIDERLADADIIISSTASPLPIIGKGMVERALKARRNQPMLLVDIAVPRDIEPEVGKLANAYLYSVDDLHAIIQSNLAQRKAAAVQAESIVQQESINFMAWLRSQGAVETIRDYRSQADQIRAEMEAKALAAIAQGADVEQVIHELAHRLTNRLIHAPTKSLQQAAGDGDVERLQLLRDSLGLDQH.

Substrate-binding positions include 49–52 (TCNR), Ser109, 114–116 (EPQ), and Gln120. Cys50 acts as the Nucleophile in catalysis. 189–194 (GAGETI) contributes to the NADP(+) binding site.

It belongs to the glutamyl-tRNA reductase family. As to quaternary structure, homodimer.

The catalysed reaction is (S)-4-amino-5-oxopentanoate + tRNA(Glu) + NADP(+) = L-glutamyl-tRNA(Glu) + NADPH + H(+). It participates in porphyrin-containing compound metabolism; protoporphyrin-IX biosynthesis; 5-aminolevulinate from L-glutamyl-tRNA(Glu): step 1/2. Its function is as follows. Catalyzes the NADPH-dependent reduction of glutamyl-tRNA(Glu) to glutamate 1-semialdehyde (GSA). The polypeptide is Glutamyl-tRNA reductase (Serratia proteamaculans (strain 568)).